We begin with the raw amino-acid sequence, 293 residues long: Small ribosomal subunit biogenesis GTPase RsgA (293 aa).

Residues 63 to 223 (KNELVRPPIA…VADTPGFSSL (161 aa)) form the CP-type G domain. GTP is bound by residues 112-115 (SKMD) and 166-174 (GQSGVGKSS). Positions 247, 252, 254, and 260 each coordinate Zn(2+).

Belongs to the TRAFAC class YlqF/YawG GTPase family. RsgA subfamily. In terms of assembly, monomer. Associates with 30S ribosomal subunit, binds 16S rRNA. It depends on Zn(2+) as a cofactor.

It is found in the cytoplasm. Its function is as follows. One of several proteins that assist in the late maturation steps of the functional core of the 30S ribosomal subunit. Helps release RbfA from mature subunits. May play a role in the assembly of ribosomal proteins into the subunit. Circularly permuted GTPase that catalyzes slow GTP hydrolysis, GTPase activity is stimulated by the 30S ribosomal subunit. This is Small ribosomal subunit biogenesis GTPase RsgA from Bacillus cereus (strain ATCC 14579 / DSM 31 / CCUG 7414 / JCM 2152 / NBRC 15305 / NCIMB 9373 / NCTC 2599 / NRRL B-3711).